The primary structure comprises 288 residues: Energy-coupling factor transporter ATP-binding protein EcfA2 (288 aa).

The region spanning 2–244 (IKFEKVNYTY…VDFLKAHELG (243 aa)) is the ABC transporter domain. 39–46 (GHTGSGKS) contacts ATP.

It belongs to the ABC transporter superfamily. Energy-coupling factor EcfA family. Forms a stable energy-coupling factor (ECF) transporter complex composed of 2 membrane-embedded substrate-binding proteins (S component), 2 ATP-binding proteins (A component) and 2 transmembrane proteins (T component).

Its subcellular location is the cell membrane. In terms of biological role, ATP-binding (A) component of a common energy-coupling factor (ECF) ABC-transporter complex. Unlike classic ABC transporters this ECF transporter provides the energy necessary to transport a number of different substrates. The protein is Energy-coupling factor transporter ATP-binding protein EcfA2 of Lactococcus lactis subsp. lactis (strain IL1403) (Streptococcus lactis).